The sequence spans 402 residues: Multidrug resistance protein MdtH (402 aa).

At 1–12 (MSRVSQARNLGK) the chain is on the cytoplasmic side. A helical transmembrane segment spans residues 13–33 (YFLLIDNMLVVLGFFVVFPLI). Over 34 to 98 (SIRFVDQMGW…GFATMGIAHE (65 aa)) the chain is Periplasmic. The helical transmembrane segment at 99–116 (PWLLWFSCLLSGLGGTLF) threads the bilayer. Residues 117 to 138 (DPPRSALVVKLIRPQQRGRFFS) are Cytoplasmic-facing. A helical membrane pass occupies residues 139–159 (LLMMQDSAGAVIGALLGSWLL). The Periplasmic portion of the chain corresponds to 160–164 (QYDFR). Residues 165–185 (LVCATGAVLFVLCAAFNAWLL) form a helical membrane-spanning segment. The Cytoplasmic segment spans residues 186-213 (PAWKLSTVRTPVREGMTRVMRDKRFVTY). A helical transmembrane segment spans residues 214 to 234 (VLTLAGYYMLAVQVMLMLPIM). Residues 235 to 243 (VNDVAGAPS) are Periplasmic-facing. Residues 244–264 (AVKWMYAIEACLSLTLLYPIA) traverse the membrane as a helical segment. Over 265–276 (RWSEKHFRLEHR) the chain is Cytoplasmic. A helical membrane pass occupies residues 277–297 (LMAGLLIMSLSMMPVGMVSGL). The Periplasmic segment spans residues 298-299 (QQ). Residues 300–320 (LFTLICLFYIGSIIAEPARET) traverse the membrane as a helical segment. The Cytoplasmic portion of the chain corresponds to 321 to 339 (LSASLADARARGSYMGCSR). A helical membrane pass occupies residues 340–360 (LGLAIGGAIGYIGGGWLFDLG). Topologically, residues 361–367 (KSAHQPE) are periplasmic. A helical membrane pass occupies residues 368–388 (LPWMMLGIIGIFTFLALGWQF). Residues 389–402 (SQKRAARRLLERDA) are Cytoplasmic-facing.

The protein belongs to the major facilitator superfamily. DHA1 family. MdtH (TC 2.A.1.2.21) subfamily.

The protein resides in the cell inner membrane. Confers resistance to norfloxacin and enoxacin. The protein is Multidrug resistance protein MdtH of Escherichia coli (strain SE11).